The chain runs to 940 residues: Coatomer subunit beta (940 aa).

HEAT repeat units lie at residues 11–48 (FLEAPSVDALKTSLESKNDYVKISAMKTILRVVINGDS), 90–125 (QEMILACNSFRNDLQHPNEFIRGATLRFLCKLKEPE), 126–162 (LLDPLIPTVRQCLEHRHAYVRKNAILAVFSIYQVSNH), and 310–347 (SILEDLITDVIPFLSSSDFDVCEKAISIIMGLVSSRNV).

As to quaternary structure, oligomeric complex that consists of at least the alpha, beta, beta', gamma, delta, epsilon and zeta subunits.

The protein resides in the cytoplasm. Its subcellular location is the golgi apparatus membrane. It is found in the cytoplasmic vesicle. It localises to the COPI-coated vesicle membrane. In terms of biological role, the coatomer is a cytosolic protein complex that binds to dilysine motifs and reversibly associates with Golgi non-clathrin-coated vesicles, which further mediate biosynthetic protein transport from the ER, via the Golgi up to the trans Golgi network. Coatomer complex is required for budding from Golgi membranes, and is essential for the retrograde Golgi-to-ER transport of dilysine-tagged proteins. The protein is Coatomer subunit beta (sec26) of Schizosaccharomyces pombe (strain 972 / ATCC 24843) (Fission yeast).